A 348-amino-acid chain; its full sequence is Phosphoribosylformylglycinamidine cyclo-ligase (348 aa).

This sequence belongs to the AIR synthase family.

It is found in the cytoplasm. The enzyme catalyses 2-formamido-N(1)-(5-O-phospho-beta-D-ribosyl)acetamidine + ATP = 5-amino-1-(5-phospho-beta-D-ribosyl)imidazole + ADP + phosphate + H(+). It participates in purine metabolism; IMP biosynthesis via de novo pathway; 5-amino-1-(5-phospho-D-ribosyl)imidazole from N(2)-formyl-N(1)-(5-phospho-D-ribosyl)glycinamide: step 2/2. The polypeptide is Phosphoribosylformylglycinamidine cyclo-ligase (Citrifermentans bemidjiense (strain ATCC BAA-1014 / DSM 16622 / JCM 12645 / Bem) (Geobacter bemidjiensis)).